The following is a 362-amino-acid chain: Adenosine kinase (362 aa).

Ala2 is modified (N-acetylalanine). The Nuclear localization signal motif lies at 8–16 (PKPKKLKVE). Asp35 is an adenosine binding site. Ser49 is a Mg(2+) binding site. Tyr77 carries the phosphotyrosine modification. Mg(2+) is bound by residues Asp147 and Asn148. Adenosine is bound at residue Gln306. The active-site Proton acceptor is the Asp317.

The protein belongs to the carbohydrate kinase PfkB family. Monomer. The cofactor is Mg(2+). As to expression, widely expressed. Highest level in placenta, liver, muscle and kidney.

It localises to the nucleus. It is found in the cytoplasm. It catalyses the reaction adenosine + ATP = AMP + ADP + H(+). Its pathway is purine metabolism; AMP biosynthesis via salvage pathway; AMP from adenosine: step 1/1. With respect to regulation, activity is inhibited by 5-iodotubercidin and 5'-amino-5'-deoxyadenosine. Its function is as follows. Catalyzes the phosphorylation of the purine nucleoside adenosine at the 5' position in an ATP-dependent manner. Serves as a potential regulator of concentrations of extracellular adenosine and intracellular adenine nucleotides. This chain is Adenosine kinase, found in Homo sapiens (Human).